The sequence spans 241 residues: Ribosomal RNA small subunit methyltransferase G (241 aa).

S-adenosyl-L-methionine-binding positions include Gly-96, Phe-101, 119-121 (EAS), 147-148 (VE), and Arg-166.

The protein belongs to the methyltransferase superfamily. RNA methyltransferase RsmG family.

Its subcellular location is the cytoplasm. It catalyses the reaction guanosine(527) in 16S rRNA + S-adenosyl-L-methionine = N(7)-methylguanosine(527) in 16S rRNA + S-adenosyl-L-homocysteine. Functionally, specifically methylates the N7 position of guanine in position 527 of 16S rRNA. The chain is Ribosomal RNA small subunit methyltransferase G from Syntrophus aciditrophicus (strain SB).